Here is a 507-residue protein sequence, read N- to C-terminus: ATP synthase subunit alpha, chloroplastic (507 aa).

170 to 177 (GDRQTGKT) is a binding site for ATP.

It belongs to the ATPase alpha/beta chains family. In terms of assembly, F-type ATPases have 2 components, CF(1) - the catalytic core - and CF(0) - the membrane proton channel. CF(1) has five subunits: alpha(3), beta(3), gamma(1), delta(1), epsilon(1). CF(0) has four main subunits: a, b, b' and c.

Its subcellular location is the plastid. It localises to the chloroplast thylakoid membrane. It catalyses the reaction ATP + H2O + 4 H(+)(in) = ADP + phosphate + 5 H(+)(out). In terms of biological role, produces ATP from ADP in the presence of a proton gradient across the membrane. The alpha chain is a regulatory subunit. This is ATP synthase subunit alpha, chloroplastic from Gossypium barbadense (Sea Island cotton).